A 167-amino-acid polypeptide reads, in one-letter code: Putative universal stress protein SSP1056 (167 aa).

Belongs to the universal stress protein A family.

It is found in the cytoplasm. This is Putative universal stress protein SSP1056 from Staphylococcus saprophyticus subsp. saprophyticus (strain ATCC 15305 / DSM 20229 / NCIMB 8711 / NCTC 7292 / S-41).